A 99-amino-acid chain; its full sequence is Putative protein tag-209 (99 aa).

The signal sequence occupies residues 1-16; sequence MLKLLAFVALLSVSVS.

This Caenorhabditis elegans protein is Putative protein tag-209 (tag-209).